Reading from the N-terminus, the 308-residue chain is Transaldolase (308 aa).

The active-site Schiff-base intermediate with substrate is the Lys125.

The protein belongs to the transaldolase family. Type 1 subfamily. Homodimer.

It localises to the cytoplasm. The catalysed reaction is D-sedoheptulose 7-phosphate + D-glyceraldehyde 3-phosphate = D-erythrose 4-phosphate + beta-D-fructose 6-phosphate. It participates in carbohydrate degradation; pentose phosphate pathway; D-glyceraldehyde 3-phosphate and beta-D-fructose 6-phosphate from D-ribose 5-phosphate and D-xylulose 5-phosphate (non-oxidative stage): step 2/3. Its function is as follows. Transaldolase is important for the balance of metabolites in the pentose-phosphate pathway. The sequence is that of Transaldolase from Stutzerimonas stutzeri (strain A1501) (Pseudomonas stutzeri).